The following is a 376-amino-acid chain: Probable tRNA sulfurtransferase (376 aa).

Residues 51 to 152 form the THUMP domain; sequence EENLKNLKYV…KNSVYVFDKS (102 aa). Residues 170-171, 195-196, R252, G274, and Q283 contribute to the ATP site; these read LI and TF.

Belongs to the ThiI family.

It is found in the cytoplasm. The enzyme catalyses [ThiI sulfur-carrier protein]-S-sulfanyl-L-cysteine + a uridine in tRNA + 2 reduced [2Fe-2S]-[ferredoxin] + ATP + H(+) = [ThiI sulfur-carrier protein]-L-cysteine + a 4-thiouridine in tRNA + 2 oxidized [2Fe-2S]-[ferredoxin] + AMP + diphosphate. It catalyses the reaction [ThiS sulfur-carrier protein]-C-terminal Gly-Gly-AMP + S-sulfanyl-L-cysteinyl-[cysteine desulfurase] + AH2 = [ThiS sulfur-carrier protein]-C-terminal-Gly-aminoethanethioate + L-cysteinyl-[cysteine desulfurase] + A + AMP + 2 H(+). The protein operates within cofactor biosynthesis; thiamine diphosphate biosynthesis. Its function is as follows. Catalyzes the ATP-dependent transfer of a sulfur to tRNA to produce 4-thiouridine in position 8 of tRNAs, which functions as a near-UV photosensor. Also catalyzes the transfer of sulfur to the sulfur carrier protein ThiS, forming ThiS-thiocarboxylate. This is a step in the synthesis of thiazole, in the thiamine biosynthesis pathway. The sulfur is donated as persulfide by IscS. This chain is Probable tRNA sulfurtransferase, found in Mycoplasmopsis synoviae (strain 53) (Mycoplasma synoviae).